The following is a 308-amino-acid chain: Carbamate kinase (308 aa).

It belongs to the carbamate kinase family.

It localises to the cytoplasm. It catalyses the reaction hydrogencarbonate + NH4(+) + ATP = carbamoyl phosphate + ADP + H2O + H(+). This is Carbamate kinase from Synechocystis sp. (strain ATCC 27184 / PCC 6803 / Kazusa).